Consider the following 1131-residue polypeptide: PPi-type phosphoenolpyruvate carboxykinase (1131 aa).

Belongs to the PPi-type phosphoenolpyruvate carboxykinase family. In terms of assembly, monomer and trimer; forms heterotrimers with PEPCK2 and PEPCK3.

The enzyme catalyses oxaloacetate + diphosphate = phosphoenolpyruvate + phosphate + CO2. Its function is as follows. Inorganic pyrophosphate (PPi)-dependent phosphoenolpyruvate carboxykinase, which regulates the carbon flow of the central metabolism by fixing CO(2) to phosphoenolpyruvate to produce oxaloacetate. Can also produce pyruvate and diphosphate from phosphoenolpyruvate and phosphate. This Propionibacterium freudenreichii subsp. freudenreichii protein is PPi-type phosphoenolpyruvate carboxykinase.